A 147-amino-acid chain; its full sequence is Mannitol-specific cryptic phosphotransferase enzyme IIA component (147 aa).

Residues 5–147 (DYFPESSISV…KQLADIISRG (143 aa)) enclose the PTS EIIA type-2 domain. His-67 (tele-phosphohistidine intermediate) is an active-site residue. His-67 carries the post-translational modification Phosphohistidine; by HPr.

The protein resides in the cytoplasm. The phosphoenolpyruvate-dependent sugar phosphotransferase system (sugar PTS), a major carbohydrate active transport system, catalyzes the phosphorylation of incoming sugar substrates concomitantly with their translocation across the cell membrane. The enzyme II CmtAB PTS system is involved in D-mannitol transport. The polypeptide is Mannitol-specific cryptic phosphotransferase enzyme IIA component (cmtB) (Escherichia coli O157:H7).